Here is a 237-residue protein sequence, read N- to C-terminus: Oligoribonuclease, mitochondrial (237 aa).

The N-terminal 25 residues, 1–25 (MLGGSLGSRLLRGVGGSHGRFGARG), are a transit peptide targeting the mitochondrion. The Exonuclease domain maps to 43–207 (MVWVDLEMTG…DDISESIKEL (165 aa)). 2 residues coordinate Mg(2+): D47 and E49. S92 is modified (phosphoserine). The residue at position 122 (Y122) is a Phosphotyrosine. Residue D147 coordinates Mg(2+). K173 carries the N6-acetyllysine modification. H194 is an active-site residue. Residue D199 participates in Mg(2+) binding.

The protein belongs to the oligoribonuclease family. As to quaternary structure, homodimer. Homotetramer. Mn(2+) is required as a cofactor. The cofactor is Mg(2+). As to expression, highly expressed in the heart and at lower levels in the lymph nodes, brain, lung, liver, spleen and thymus.

It is found in the mitochondrion intermembrane space. It localises to the mitochondrion matrix. The protein resides in the mitochondrion. Its subcellular location is the cytoplasm. The protein localises to the nucleus. Its activity is regulated as follows. Inhibited by adenosine 3',5'-bisphosphate. In terms of biological role, 3'-to-5'exoribonuclease that preferentially degrades DNA and RNA oligonucleotides composed of only two nucleotides. Binds and degrades longer oligonucleotides with a lower affinity. Plays dual roles in mitochondria, scavenging nanoRNAs (small RNA oligonucleotides of &lt;5 nucleotides) that are produced by the degradosome and clearing short RNAs that are generated by RNA processing. Essential for correct initiation of mitochondrial transcription, degrading mitochondrial RNA dinucleotides to prevent RNA-primed transcription at non-canonical sites in the mitochondrial genome. Essential for embryonic development. 3'-to-5'exoribonuclease that preferentially degrades DNA and RNA oligonucleotides composed of only two nucleotides. The polypeptide is Oligoribonuclease, mitochondrial (REXO2) (Homo sapiens (Human)).